We begin with the raw amino-acid sequence, 147 residues long: Hemoglobin subunit beta-3 (147 aa).

Positions 3–147 constitute a Globin domain; the sequence is HWTAEEKAVI…LVDALSHSYH (145 aa). Residues H64 and H93 each contribute to the heme b site.

This sequence belongs to the globin family. As to quaternary structure, heterotetramer of two alpha chains and two beta chains. Red blood cells.

Functionally, this is a tadpole (larval) beta chain. This is Hemoglobin subunit beta-3 from Aquarana catesbeiana (American bullfrog).